A 386-amino-acid polypeptide reads, in one-letter code: Mannitol-1-phosphate 5-dehydrogenase (386 aa).

Position 4-15 (4-15 (AIHFGGGNIGRG)) interacts with NAD(+). Residue K211 is part of the active site.

It belongs to the mannitol dehydrogenase family. In terms of assembly, monomer.

It catalyses the reaction D-mannitol 1-phosphate + NAD(+) = beta-D-fructose 6-phosphate + NADH + H(+). Its function is as follows. Catalyzes the NAD(H)-dependent interconversion of D-fructose 6-phosphate and D-mannitol 1-phosphate in the mannitol metabolic pathway. This is Mannitol-1-phosphate 5-dehydrogenase (mpdA) from Emericella nidulans (strain FGSC A4 / ATCC 38163 / CBS 112.46 / NRRL 194 / M139) (Aspergillus nidulans).